The primary structure comprises 334 residues: Fructose-1,6-bisphosphatase class 1 2 (334 aa).

Positions 92, 114, 116, and 117 each coordinate Mg(2+). Substrate is bound by residues 117–120 (DGSS), asparagine 208, and lysine 274. Position 280 (glutamate 280) interacts with Mg(2+).

It belongs to the FBPase class 1 family. As to quaternary structure, homotetramer. The cofactor is Mg(2+).

Its subcellular location is the cytoplasm. It carries out the reaction beta-D-fructose 1,6-bisphosphate + H2O = beta-D-fructose 6-phosphate + phosphate. Its pathway is carbohydrate biosynthesis; gluconeogenesis. The sequence is that of Fructose-1,6-bisphosphatase class 1 2 from Albidiferax ferrireducens (strain ATCC BAA-621 / DSM 15236 / T118) (Rhodoferax ferrireducens).